A 236-amino-acid polypeptide reads, in one-letter code: Small ribosomal subunit protein eS6 (236 aa).

2 positions are modified to phosphoserine: S232 and S233.

The protein belongs to the eukaryotic ribosomal protein eS6 family. Phosphorylated.

The protein is Small ribosomal subunit protein eS6 (RPS6A) of Candida glabrata (strain ATCC 2001 / BCRC 20586 / JCM 3761 / NBRC 0622 / NRRL Y-65 / CBS 138) (Yeast).